The primary structure comprises 1052 residues: ATP-dependent DNA helicase MPH1 (1052 aa).

A Helicase ATP-binding domain is found at 89 to 256 (IVRKGLLQNI…EVVNNLNISK (168 aa)). 102–109 (IPTGMGKT) contacts ATP. The DEAH box motif lies at 204 to 207 (DEAH). Positions 432-649 (ELTQFFYENP…HLVQYRKSDR (218 aa)) constitute a Helicase C-terminal domain. Disordered stretches follow at residues 495-550 (HGPK…NQKQ), 798-832 (IGDT…DLPL), 869-898 (SKRQ…QPEV), and 1002-1052 (HTVS…DSDF). The segment covering 503 to 532 (SDREKRLEEERRMDEEKKQAALQEKLERTS) has biased composition (basic and acidic residues). The span at 534–549 (RTGSSEEAQLSGMNQK) shows a compositional bias: polar residues. 2 stretches are compositionally biased toward low complexity: residues 875-898 (QPEV…QPEV) and 1005-1028 (SQSQ…QQAS). Residues 1029–1040 (QKDRSSQDKDLT) show a composition bias toward basic and acidic residues. Over residues 1043-1052 (ELEDLLDSDF) the composition is skewed to acidic residues.

The protein belongs to the DEAD box helicase family. DEAH subfamily. FANCM sub-subfamily. Interacts with the MHF histone-fold complex to form the FANCM-MHF complex.

It localises to the nucleus. It catalyses the reaction ATP + H2O = ADP + phosphate + H(+). Functionally, ATP-dependent DNA helicase involved in DNA damage repair by homologous recombination and in genome maintenance. Capable of unwinding D-loops. Plays a role in limiting crossover recombinants during mitotic DNA double-strand break (DSB) repair. Component of a FANCM-MHF complex which promotes gene conversion at blocked replication forks, probably by reversal of the stalled fork. This chain is ATP-dependent DNA helicase MPH1, found in Candida glabrata (strain ATCC 2001 / BCRC 20586 / JCM 3761 / NBRC 0622 / NRRL Y-65 / CBS 138) (Yeast).